The following is a 386-amino-acid chain: Enoyl-[acyl-carrier-protein] reductase 1, mitochondrial (386 aa).

Residues 1-22 (MYSVLKQSIRPRLLATHNQFRT) constitute a mitochondrion transit peptide. Tyr-79 (proton donor) is an active-site residue. NADP(+)-binding positions include Asn-172, 199-202 (TSAV), 222-224 (RDR), 296-299 (YGGM), 321-323 (FWV), and Lys-381.

It belongs to the zinc-containing alcohol dehydrogenase family. Quinone oxidoreductase subfamily. In terms of assembly, homodimer and heterodimer with ETR2.

The protein localises to the mitochondrion. The catalysed reaction is a 2,3-saturated acyl-[ACP] + NADP(+) = a (2E)-enoyl-[ACP] + NADPH + H(+). The enzyme catalyses (2E,4E)-hexadienoyl-CoA + NADPH + H(+) = (4E)-hexenoyl-CoA + NADP(+). It catalyses the reaction (2E)-hexenoyl-CoA + NADPH + H(+) = hexanoyl-CoA + NADP(+). Its function is as follows. Catalyzes the NADPH-dependent reduction of trans-2-enoyl thioesters in mitochondrial fatty acid synthesis (fatty acid synthesis type II). Fatty acid chain elongation in mitochondria uses acyl carrier protein (ACP) as an acyl group carrier, but the enzyme accepts both ACP and CoA thioesters as substrates in vitro. Required for respiration and the maintenance of the mitochondrial compartment. The protein is Enoyl-[acyl-carrier-protein] reductase 1, mitochondrial (ETR1) of Candida tropicalis (Yeast).